The following is a 520-amino-acid chain: Putative thymidine phosphorylase 1 (520 aa).

Belongs to the thymidine/pyrimidine-nucleoside phosphorylase family. Type 2 subfamily.

It catalyses the reaction thymidine + phosphate = 2-deoxy-alpha-D-ribose 1-phosphate + thymine. The protein is Putative thymidine phosphorylase 1 of Cupriavidus necator (strain ATCC 17699 / DSM 428 / KCTC 22496 / NCIMB 10442 / H16 / Stanier 337) (Ralstonia eutropha).